An 89-amino-acid polypeptide reads, in one-letter code: Probable monothiol glutaredoxin GrlA (89 aa).

The Glutaredoxin domain maps to 1 to 89; that stretch reads MLYMKGTPKM…EPMLRDAVAA (89 aa). K5 serves as a coordination point for glutathione. [2Fe-2S] cluster is bound at residue C13. Residues R42, F54, and 67–68 contribute to the glutathione site; that span reads SD.

The protein belongs to the glutaredoxin family. Monothiol subfamily.

The protein is Probable monothiol glutaredoxin GrlA (grlA) of Legionella pneumophila subsp. pneumophila (strain Philadelphia 1 / ATCC 33152 / DSM 7513).